Reading from the N-terminus, the 1588-residue chain is Multicopy suppressor of chk1 protein 1 (1588 aa).

A disordered region spans residues 38–60; that stretch reads HAKPSTQQQQQQQNISNETTSTG. A compositionally biased stretch (polar residues) spans 51 to 60; sequence NISNETTSTG. In terms of domain architecture, JmjN spans 82-124; the sequence is NVRVTPKKEEFSRGLDFISDLYDQTARKSGAVRVIPPDNWKCP. The segment at 298-345 adopts a PHD-type 1 zinc-finger fold; that stretch reads KCKLCAQEGSSLVTCCICQSNYHYACVEAPFAPFSDIHYWTCNSCIPS. The span at 385-395 shows a compositional bias: polar residues; sequence PLTLPSNTKTP. The tract at residues 385–412 is disordered; that stretch reads PLTLPSNTKTPPASARQSSRRTRSTSGK. The JmjC domain maps to 475 to 645; that stretch reads FPTSRQNAYY…DMHAENSFNM (171 aa). Positions 848–872 are disordered; the sequence is EKRKPKRGSATHSHLESPSEEVEDL. The PHD-type 2 zinc finger occupies 1171–1220; that stretch reads FHYCFCRQPEAGMMIECELCHEWYHAKCMKMSKKKLRADEKFICPICDYR. The tract at residues 1319 to 1341 is disordered; it reads APQPPPFIGESRSNRKPRPTKRQ. The PHD-type 3 zinc-finger motif lies at 1454–1505; the sequence is SVICLCRQPFAISDGTVQCHNCLEWFHYECVGLSSDIVSTLSNYACPDCCSK.

It is found in the nucleus. Its function is as follows. Has a role in regulating chromatin structure via global deacetylation of histone H3. This function is associated with the activity of a histone deacetylase. In Schizosaccharomyces pombe (strain 972 / ATCC 24843) (Fission yeast), this protein is Multicopy suppressor of chk1 protein 1 (msc1).